A 549-amino-acid polypeptide reads, in one-letter code: Hydroxylamine reductase (549 aa).

4 residues coordinate [4Fe-4S] cluster: Cys3, Cys6, Cys15, and Cys21. Positions 244, 268, 313, 405, 433, 458, 492, and 494 each coordinate hybrid [4Fe-2O-2S] cluster. Position 405 is a cysteine persulfide (Cys405).

Belongs to the HCP family. It depends on [4Fe-4S] cluster as a cofactor. The cofactor is hybrid [4Fe-2O-2S] cluster.

The protein localises to the cytoplasm. The catalysed reaction is A + NH4(+) + H2O = hydroxylamine + AH2 + H(+). Functionally, catalyzes the reduction of hydroxylamine to form NH(3) and H(2)O. The chain is Hydroxylamine reductase from Crocosphaera subtropica (strain ATCC 51142 / BH68) (Cyanothece sp. (strain ATCC 51142)).